Consider the following 244-residue polypeptide: tRNA pseudouridine synthase A (244 aa).

The active-site Nucleophile is the Asp-52. Tyr-110 contributes to the substrate binding site.

This sequence belongs to the tRNA pseudouridine synthase TruA family. In terms of assembly, homodimer.

It carries out the reaction uridine(38/39/40) in tRNA = pseudouridine(38/39/40) in tRNA. Its function is as follows. Formation of pseudouridine at positions 38, 39 and 40 in the anticodon stem and loop of transfer RNAs. The sequence is that of tRNA pseudouridine synthase A from Clostridium botulinum (strain Eklund 17B / Type B).